The primary structure comprises 611 residues: MATVAPKGNCLVARAIPSDSHADQLTDLLCKLSVNGDANQKSVNKFESQHGVTPSDFRDIQNIRSSALAKKTKTSKFQLDGVTLFADLTPNSKSKKKTENQETKEKDEEAEEKKDGPPKDDKELKMKKEKEQEDENAELDEQKKDGDLLGRGPVHNVRVATGGSHPYHRAQIPYGCAAQTPITDISAYTGYGSGYECGSTWSLSPDTTIGSISASTTPDTVLSSDGYGSASPPQHSPKESLQSPFSDISSADTSRVLTPENNELPESLQDFILQYSNQYTKEESIRGRPPSADSGVSSPMSARSAPYASPHVPQGTCSGPTTPSFNQTRLSPRTSENGITAKQRLNAIIPESDLATGFHWACTTWKNVLTNRDADGDTPLHIVAAHNDLGKIYALCETLRKTMNENDDNVFNVSNNFGETPLYVAVLQRSIEVVEYLLELGASPNSRSSRAVGDSPLHFATARGMNNMVEALLSKREIRVNETNDDGQTSLLCAVKMHGMMDEQTQHKIDNKSIIEMLIKAGADPTIAETSTGKTIVHHAVDKMDVELLDFLKTVVNEDTFTELANLSDFHGDTAVDLLCSSTQNEDTNNVRENLYIRLLTSGAVPNKSRA.

Residues 91 to 149 are a coiled coil; sequence NSKSKKKTENQETKEKDEEAEEKKDGPPKDDKELKMKKEKEQEDENAELDEQKKDGDLL. Disordered regions lie at residues 92 to 167, 212 to 255, and 280 to 333; these read SKSK…SHPY, ISAS…DTSR, and TKEE…LSPR. Positions 97 to 131 are enriched in basic and acidic residues; that stretch reads KTENQETKEKDEEAEEKKDGPPKDDKELKMKKEKE. Polar residues-rich tracts occupy residues 212 to 223, 239 to 255, and 315 to 333; these read ISASTTPDTVLS, ESLQSPFSDISSADTSR, and GTCSGPTTPSFNQTRLSPR. ANK repeat units follow at residues 375–405, 417–446, 452–482, 486–527, and 532–561; these read DGDTPLHIVAAHNDLGKIYALCETLRKTMNE, FGETPLYVAVLQRSIEVVEYLLELGASPNS, VGDSPLHFATARGMNNMVEALLSKREIRVNE, DGQT…DPTI, and TGKTIVHHAVDKMDVELLDFLKTVVNEDTF.

It belongs to the iASPP family. In terms of tissue distribution, expressed in the nervous system.

Acts downstream of the receptor complex composed of ilcr-1 and ilcr-2, which is a signaling complex that modulates neuronal activity and animal behavior in response to sensory neuron input. Mediates signaling of the complex. The protein is ANK repeat-containing protein nipk-1 of Caenorhabditis elegans.